Reading from the N-terminus, the 387-residue chain is Alkanesulfonate monooxygenase (387 aa).

Residues 365–387 form a disordered region; sequence HNSGPFGETVGNDYRPSRLASQS.

Belongs to the SsuD family.

The catalysed reaction is an alkanesulfonate + FMNH2 + O2 = an aldehyde + FMN + sulfite + H2O + 2 H(+). Functionally, catalyzes the desulfonation of aliphatic sulfonates. This is Alkanesulfonate monooxygenase from Bradyrhizobium diazoefficiens (strain JCM 10833 / BCRC 13528 / IAM 13628 / NBRC 14792 / USDA 110).